We begin with the raw amino-acid sequence, 458 residues long: Ribulose bisphosphate carboxylase (458 aa).

Asparagine 111 contacts substrate. Residue lysine 166 is the Proton acceptor of the active site. Lysine 168 is a binding site for substrate. Lysine 191, aspartate 193, and glutamate 194 together coordinate Mg(2+). An N6-carboxylysine modification is found at lysine 191. Histidine 287 acts as the Proton acceptor in catalysis. Substrate is bound by residues arginine 288, histidine 321, and serine 368.

Belongs to the RuBisCO large chain family. Type II subfamily. Homodimer. Requires Mg(2+) as cofactor.

The enzyme catalyses 2 (2R)-3-phosphoglycerate + 2 H(+) = D-ribulose 1,5-bisphosphate + CO2 + H2O. The catalysed reaction is D-ribulose 1,5-bisphosphate + O2 = 2-phosphoglycolate + (2R)-3-phosphoglycerate + 2 H(+). RuBisCO catalyzes two reactions: the carboxylation of D-ribulose 1,5-bisphosphate, the primary event in carbon dioxide fixation, as well as the oxidative fragmentation of the pentose substrate. Both reactions occur simultaneously and in competition at the same active site. In Rhodobacter capsulatus (strain ATCC BAA-309 / NBRC 16581 / SB1003), this protein is Ribulose bisphosphate carboxylase (cbbM).